Reading from the N-terminus, the 181-residue chain is Adenine phosphoribosyltransferase (181 aa).

The protein belongs to the purine/pyrimidine phosphoribosyltransferase family. Homodimer.

Its subcellular location is the cytoplasm. It carries out the reaction AMP + diphosphate = 5-phospho-alpha-D-ribose 1-diphosphate + adenine. It participates in purine metabolism; AMP biosynthesis via salvage pathway; AMP from adenine: step 1/1. In terms of biological role, catalyzes a salvage reaction resulting in the formation of AMP, that is energically less costly than de novo synthesis. The polypeptide is Adenine phosphoribosyltransferase (Mesorhizobium japonicum (strain LMG 29417 / CECT 9101 / MAFF 303099) (Mesorhizobium loti (strain MAFF 303099))).